A 253-amino-acid polypeptide reads, in one-letter code: Ubiquinone biosynthesis O-methyltransferase (253 aa).

S-adenosyl-L-methionine-binding residues include R47, G78, D99, and M141.

Belongs to the methyltransferase superfamily. UbiG/COQ3 family.

The catalysed reaction is a 3-demethylubiquinol + S-adenosyl-L-methionine = a ubiquinol + S-adenosyl-L-homocysteine + H(+). It carries out the reaction a 3-(all-trans-polyprenyl)benzene-1,2-diol + S-adenosyl-L-methionine = a 2-methoxy-6-(all-trans-polyprenyl)phenol + S-adenosyl-L-homocysteine + H(+). It participates in cofactor biosynthesis; ubiquinone biosynthesis. O-methyltransferase that catalyzes the 2 O-methylation steps in the ubiquinone biosynthetic pathway. This is Ubiquinone biosynthesis O-methyltransferase from Rhodopseudomonas palustris (strain ATCC BAA-98 / CGA009).